The sequence spans 495 residues: ATP synthase subunit beta, chloroplastic (495 aa).

Residue 172 to 179 coordinates ATP; the sequence is GGAGVGKT.

Belongs to the ATPase alpha/beta chains family. As to quaternary structure, F-type ATPases have 2 components, CF(1) - the catalytic core - and CF(0) - the membrane proton channel. CF(1) has five subunits: alpha(3), beta(3), gamma(1), delta(1), epsilon(1). CF(0) has four main subunits: a(1), b(1), b'(1) and c(9-12).

It is found in the plastid. Its subcellular location is the chloroplast thylakoid membrane. It catalyses the reaction ATP + H2O + 4 H(+)(in) = ADP + phosphate + 5 H(+)(out). In terms of biological role, produces ATP from ADP in the presence of a proton gradient across the membrane. The catalytic sites are hosted primarily by the beta subunits. The chain is ATP synthase subunit beta, chloroplastic from Scilla messeniaca (Greek squill).